The chain runs to 290 residues: Cilia- and flagella-associated protein 298 (290 aa).

The protein belongs to the CFAP298 family. Interacts with ZMYND10. Expressed in the trachea (at protein level).

The protein localises to the cytoplasm. The protein resides in the cytoskeleton. Its subcellular location is the cilium basal body. Plays a role in motile cilium function, possibly by acting on outer dynein arm assembly. Seems to be important for initiation rather than maintenance of cilium motility. Required for correct positioning of cilia at the apical cell surface, suggesting an additional role in the planar cell polarity (PCP) pathway. May suppress canonical Wnt signaling activity. The sequence is that of Cilia- and flagella-associated protein 298 from Rattus norvegicus (Rat).